The chain runs to 204 residues: UPF0301 protein Mflv_0850 (204 aa).

This sequence belongs to the UPF0301 (AlgH) family.

The sequence is that of UPF0301 protein Mflv_0850 from Mycolicibacterium gilvum (strain PYR-GCK) (Mycobacterium gilvum (strain PYR-GCK)).